We begin with the raw amino-acid sequence, 200 residues long: Protein-methionine-sulfoxide reductase heme-binding subunit MsrQ (200 aa).

The next 5 membrane-spanning stretches (helical) occupy residues 8–28, 54–74, 79–99, 116–136, and 153–173; these read ITWL…WLFY, LLLA…PLLI, LLGL…SLLE, PYLT…LTSF, and FIYL…KILS.

It belongs to the MsrQ family. In terms of assembly, heterodimer of a catalytic subunit (MsrP) and a heme-binding subunit (MsrQ). FMN serves as cofactor. The cofactor is heme b.

It localises to the cell inner membrane. Part of the MsrPQ system that repairs oxidized periplasmic proteins containing methionine sulfoxide residues (Met-O), using respiratory chain electrons. Thus protects these proteins from oxidative-stress damage caused by reactive species of oxygen and chlorine generated by the host defense mechanisms. MsrPQ is essential for the maintenance of envelope integrity under bleach stress, rescuing a wide series of structurally unrelated periplasmic proteins from methionine oxidation. MsrQ provides electrons for reduction to the reductase catalytic subunit MsrP, using the quinone pool of the respiratory chain. The chain is Protein-methionine-sulfoxide reductase heme-binding subunit MsrQ from Cronobacter sakazakii (strain ATCC BAA-894) (Enterobacter sakazakii).